Here is a 108-residue protein sequence, read N- to C-terminus: Small ribosomal subunit protein eS25 (108 aa).

Residues 1–36 are disordered; the sequence is MAPKKAQAPPPSSKPAKSGGGKQKKKKWSKGKQKEK. Residues 22–31 are compositionally biased toward basic residues; sequence KQKKKKWSKG.

This sequence belongs to the eukaryotic ribosomal protein eS25 family.

The polypeptide is Small ribosomal subunit protein eS25 (RPS25) (Solanum lycopersicum (Tomato)).